A 335-amino-acid chain; its full sequence is Methionine import ATP-binding protein MetN (335 aa).

In terms of domain architecture, ABC transporter spans 2–241 (IQFKDSYKHY…PQHPTTRSFV (240 aa)). 38 to 45 (GHSGAGKS) contacts ATP.

The protein belongs to the ABC transporter superfamily. Methionine importer (TC 3.A.1.24) family. The complex is composed of two ATP-binding proteins (MetN), two transmembrane proteins (MetI) and a solute-binding protein (MetQ).

It localises to the cell inner membrane. It carries out the reaction L-methionine(out) + ATP + H2O = L-methionine(in) + ADP + phosphate + H(+). The enzyme catalyses D-methionine(out) + ATP + H2O = D-methionine(in) + ADP + phosphate + H(+). Functionally, part of the ABC transporter complex MetNIQ involved in methionine import. Responsible for energy coupling to the transport system. This Xylella fastidiosa (strain Temecula1 / ATCC 700964) protein is Methionine import ATP-binding protein MetN.